The sequence spans 503 residues: Transcriptional regulator LovE (503 aa).

The span at 1–14 (MAADQGTFTTSVTL) shows a compositional bias: polar residues. The segment at 1–21 (MAADQGTFTTSVTLSPVEGSR) is disordered. Residues 35 to 67 (CDRCHAQKIKCTGNKEVTARAPCQRCQQAGLRC) constitute a DNA-binding region (zn(2)-C6 fungal-type). Disordered stretches follow at residues 89-124 (ADPD…RQFL) and 331-362 (SHMN…DTIP). The segment covering 339–349 (SRSESPSRDDT) has biased composition (basic and acidic residues). Over residues 350-359 (SSTSGHSSVD) the composition is skewed to polar residues.

The protein localises to the nucleus. Functionally, transcription factor that regulates the expression of the he gene cluster that mediates the biosynthesis of lovastatin (also known as mevinolin, mevacor or monacolin K), a hypolipidemic inhibitor of (3S)-hydroxymethylglutaryl-coenzyme A (HMG-CoA) reductase (HMGR). The polypeptide is Transcriptional regulator LovE (Aspergillus terreus (strain NIH 2624 / FGSC A1156)).